We begin with the raw amino-acid sequence, 114 residues long: Large ribosomal subunit protein bL17 (114 aa).

This sequence belongs to the bacterial ribosomal protein bL17 family. Part of the 50S ribosomal subunit. Contacts protein L32.

This Clostridium acetobutylicum (strain ATCC 824 / DSM 792 / JCM 1419 / IAM 19013 / LMG 5710 / NBRC 13948 / NRRL B-527 / VKM B-1787 / 2291 / W) protein is Large ribosomal subunit protein bL17.